Consider the following 116-residue polypeptide: Photosystem II assembly factor Psb28 protein (116 aa).

This sequence belongs to the Psb28 family. Part of a photosystem II (PSII) assembly intermediate complex PSII-I; crystallized from a strain deleted of psbJ, it forms monomeric PSII before addition of the oxygen evolving complex. PSII-I includes 3 assembly factors not found in mature PSII (Psb27, Psb28 and Psb34). This protein binds to the cytoplasmic face of D1 and D2 (psbA and psbD), contacting CP47 (psbB) directly above the quinone b-binding site.

It is found in the cellular thylakoid membrane. Functionally, a photosystem II (PSII) assembly factor that binds PSII during biogenesis, protecting the complex until water splitting is activated. This chain is Photosystem II assembly factor Psb28 protein, found in Thermosynechococcus vestitus (strain NIES-2133 / IAM M-273 / BP-1).